Consider the following 360-residue polypeptide: Geranylgeranyl pyrophosphate synthase 3, chloroplastic (360 aa).

A chloroplast-targeting transit peptide spans 1–39; the sequence is MATTVHLSSFSLFIQSRGRRDNSISSVKSLKKRTGLSPS. Residues 24-54 form a disordered region; sequence ISSVKSLKKRTGLSPSSALTSQGGRDMIPPE. Residues 36 to 46 are compositionally biased toward polar residues; it reads LSPSSALTSQG. Positions 106, 109, and 138 each coordinate isopentenyl diphosphate. Mg(2+) contacts are provided by aspartate 145 and aspartate 151. Position 156 (arginine 156) interacts with dimethylallyl diphosphate. Arginine 157 lines the isopentenyl diphosphate pocket. Dimethylallyl diphosphate-binding residues include lysine 245, threonine 246, glutamine 283, lysine 300, and lysine 310.

This sequence belongs to the FPP/GGPP synthase family. As to quaternary structure, monomer. The cofactor is Mg(2+). Mainly expressed in roots.

Its subcellular location is the plastid. The protein resides in the chloroplast. The catalysed reaction is isopentenyl diphosphate + dimethylallyl diphosphate = (2E)-geranyl diphosphate + diphosphate. It carries out the reaction isopentenyl diphosphate + (2E)-geranyl diphosphate = (2E,6E)-farnesyl diphosphate + diphosphate. It catalyses the reaction isopentenyl diphosphate + (2E,6E)-farnesyl diphosphate = (2E,6E,10E)-geranylgeranyl diphosphate + diphosphate. The protein operates within isoprenoid biosynthesis; farnesyl diphosphate biosynthesis; farnesyl diphosphate from geranyl diphosphate and isopentenyl diphosphate: step 1/1. Its pathway is isoprenoid biosynthesis; geranyl diphosphate biosynthesis; geranyl diphosphate from dimethylallyl diphosphate and isopentenyl diphosphate: step 1/1. It functions in the pathway isoprenoid biosynthesis; geranylgeranyl diphosphate biosynthesis; geranylgeranyl diphosphate from farnesyl diphosphate and isopentenyl diphosphate: step 1/1. Its function is as follows. Catalyzes the trans-addition of the three molecules of IPP onto DMAPP to form geranylgeranyl pyrophosphate. This chain is Geranylgeranyl pyrophosphate synthase 3, chloroplastic (GGPP3), found in Arabidopsis thaliana (Mouse-ear cress).